A 259-amino-acid chain; its full sequence is Deoxyribose-phosphate aldolase (259 aa).

The Proton donor/acceptor role is filled by D102. The active-site Schiff-base intermediate with acetaldehyde is K167. Catalysis depends on K201, which acts as the Proton donor/acceptor.

It belongs to the DeoC/FbaB aldolase family. DeoC type 2 subfamily.

It localises to the cytoplasm. It carries out the reaction 2-deoxy-D-ribose 5-phosphate = D-glyceraldehyde 3-phosphate + acetaldehyde. It participates in carbohydrate degradation; 2-deoxy-D-ribose 1-phosphate degradation; D-glyceraldehyde 3-phosphate and acetaldehyde from 2-deoxy-alpha-D-ribose 1-phosphate: step 2/2. Catalyzes a reversible aldol reaction between acetaldehyde and D-glyceraldehyde 3-phosphate to generate 2-deoxy-D-ribose 5-phosphate. The polypeptide is Deoxyribose-phosphate aldolase (Erwinia tasmaniensis (strain DSM 17950 / CFBP 7177 / CIP 109463 / NCPPB 4357 / Et1/99)).